Consider the following 137-residue polypeptide: Putative pre-16S rRNA nuclease (137 aa).

The protein belongs to the YqgF nuclease family.

It localises to the cytoplasm. Could be a nuclease involved in processing of the 5'-end of pre-16S rRNA. The polypeptide is Putative pre-16S rRNA nuclease (Actinobacillus pleuropneumoniae serotype 7 (strain AP76)).